Here is a 477-residue protein sequence, read N- to C-terminus: Protoporphyrinogen oxidase (477 aa).

FAD is bound by residues 9 to 14 (GGGISG), W42, 57 to 60 (GPRG), V257, A449, and 454 to 456 (VAV).

The protein belongs to the protoporphyrinogen/coproporphyrinogen oxidase family. Protoporphyrinogen oxidase subfamily. As to quaternary structure, monomer. Homodimer. It depends on FAD as a cofactor. As to expression, detected in liver (at protein level).

It localises to the mitochondrion inner membrane. The catalysed reaction is protoporphyrinogen IX + 3 O2 = protoporphyrin IX + 3 H2O2. It functions in the pathway porphyrin-containing compound metabolism; protoporphyrin-IX biosynthesis; protoporphyrin-IX from protoporphyrinogen-IX: step 1/1. Catalyzes the 6-electron oxidation of protoporphyrinogen-IX to form protoporphyrin-IX. This Bos taurus (Bovine) protein is Protoporphyrinogen oxidase (PPOX).